A 252-amino-acid chain; its full sequence is Short chain dehydrogenase andC (252 aa).

The N-terminal stretch at Met-1–Ala-25 is a signal peptide. NADP(+)-binding residues include Ile-11, Asp-57, and Arg-119. The active-site Proton donor is Ser-137. Residues Tyr-151 and Lys-155 each coordinate NADP(+). The active-site Proton acceptor is Tyr-151. Catalysis depends on Lys-155, which acts as the Lowers pKa of active site Tyr.

Belongs to the short-chain dehydrogenases/reductases (SDR) family.

It functions in the pathway secondary metabolite biosynthesis; terpenoid biosynthesis. Short chain dehydrogenase; part of the gene cluster that mediates the biosynthesis of anditomin, a fungal meroterpenoid. The first step of the pathway is the synthesis of 3,5-dimethylorsellinic acid (DMOA) by the polyketide synthase andM. DMOA is then converted to the phthalide compound 5,7-dihydroxy-4,6-dimethylphthalide (DHDMP) by the cytochrome P450 monooxygenase andK, which is further prenylated by the prenyltransferase andD to yield farnesyl-DHDMP. Further epoxidation by the FAD-dependent monooxygenase andE leads to epoxyfarnesyl-DHDMP. The next step involves the terpene cyclase andB that converts epoxyfarnesyl-DHDMP into preandiloid A through opening of the epoxide ring followed by the cyclization of the farnesyl moiety. Preandiloid A is in turn oxidized at the C-3 hydroxyl group to yield preandiloid B by the dehydrogenase andC. The dioxygenase andA is solely responsible for the dehydrogenation of preandiloid B leading to the enone preandiloid C, as well as for the intriguing structural rearrangement to generate the bicyclo[2.2.2]octane core, transforming preandiloid C into andiconin. FAD-binding monooxygenase andJ then produces andilesin D which is reduced by dehydrogenase andI to yield andilesin A. Action of acetyltransferase andG followed by a spontaneous acetate elimination leads then to andilesin B, which is in turn substrate of the short chain dehydrogenase andH to yield andilesin C. Finally, the dioxygenase andF catalyzes the transformation of andilesin C to anditomin. The sequence is that of Short chain dehydrogenase andC from Emericella variicolor (Aspergillus stellatus).